A 525-amino-acid polypeptide reads, in one-letter code: Mitochondrial-processing peptidase subunit alpha (525 aa).

The transit peptide at 1-33 (MAAVVLAATRLLRGSGSWGCSRLRFGPPAYRRF) directs the protein to the mitochondrion. Lysine 64 bears the N6-succinyllysine mark. Position 299 is an N6-acetyllysine (lysine 299).

It belongs to the peptidase M16 family. Heterodimer of PMPCA (alpha) and PMPCB (beta) subunits, forming the mitochondrial processing protease (MPP) in which PMPCA is involved in substrate recognition and binding and PMPCB is the catalytic subunit. Ubiquitously expressed with highest expression in fetal tissues and adult brain, cerebellum and cerebellar vermis.

Its subcellular location is the mitochondrion matrix. It is found in the mitochondrion inner membrane. Functionally, substrate recognition and binding subunit of the essential mitochondrial processing protease (MPP), which cleaves the mitochondrial sequence off newly imported precursors proteins. This is Mitochondrial-processing peptidase subunit alpha (PMPCA) from Homo sapiens (Human).